A 338-amino-acid polypeptide reads, in one-letter code: DNA-directed RNA polymerase subunit alpha (338 aa).

Residues 1-234 form an alpha N-terminal domain (alpha-NTD) region; the sequence is MIERNWNELI…DQLQIFITFE (234 aa). Positions 250 to 338 are alpha C-terminal domain (alpha-CTD); the sequence is FNPALLKKVD…DLAKKFEDQI (89 aa).

The protein belongs to the RNA polymerase alpha chain family. Homodimer. The RNAP catalytic core consists of 2 alpha, 1 beta, 1 beta' and 1 omega subunit. When a sigma factor is associated with the core the holoenzyme is formed, which can initiate transcription.

It catalyses the reaction RNA(n) + a ribonucleoside 5'-triphosphate = RNA(n+1) + diphosphate. Its function is as follows. DNA-dependent RNA polymerase catalyzes the transcription of DNA into RNA using the four ribonucleoside triphosphates as substrates. In Caulobacter vibrioides (strain ATCC 19089 / CIP 103742 / CB 15) (Caulobacter crescentus), this protein is DNA-directed RNA polymerase subunit alpha.